Reading from the N-terminus, the 194-residue chain is tRNA (guanine-N(1)-)-methyltransferase (194 aa).

Residues Gly78 and 97–102 contribute to the S-adenosyl-L-methionine site; that span reads IGDYVL.

The protein belongs to the RNA methyltransferase TrmD family. As to quaternary structure, homodimer.

It is found in the cytoplasm. The enzyme catalyses guanosine(37) in tRNA + S-adenosyl-L-methionine = N(1)-methylguanosine(37) in tRNA + S-adenosyl-L-homocysteine + H(+). In terms of biological role, specifically methylates guanosine-37 in various tRNAs. The chain is tRNA (guanine-N(1)-)-methyltransferase from Mycoplasma mobile (strain ATCC 43663 / 163K / NCTC 11711) (Mesomycoplasma mobile).